A 295-amino-acid polypeptide reads, in one-letter code: Protein transport protein SSO2 (295 aa).

Over residues 1–18 (MSNPYQNSQNGYQQNNSY) the composition is skewed to low complexity. Residues 1 to 31 (MSNPYQNSQNGYQQNNSYELNNYPNKQYSSS) are disordered. At 1–270 (MSNPYQNSQN…SAKSARKKKL (270 aa)) the chain is on the cytoplasmic side. Over residues 19–31 (ELNNYPNKQYSSS) the composition is skewed to polar residues. The stretch at 33–110 (EDDFVQFMNE…NRIKNVQTQA (78 aa)) forms a coiled coil. One can recognise a t-SNARE coiled-coil homology domain in the interval 196 to 258 (LNEVQVRHRE…EQGVGHTNKA (63 aa)). The helical; Anchor for type IV membrane protein transmembrane segment at 271–291 (WCFFICLLIVIILAVILGAYF) threads the bilayer. Residues 292–295 (GTRK) lie on the Extracellular side of the membrane.

It belongs to the syntaxin family.

It localises to the membrane. Its function is as follows. Late secretory t-SNARE protein required for secretion and proper cytokinesis. Plays an important role in the secretion of virulence-associated extracellular enzymes and vesicle-mediated polarized hyphal growth. This chain is Protein transport protein SSO2 (SSO2), found in Candida albicans (strain SC5314 / ATCC MYA-2876) (Yeast).